The sequence spans 392 residues: Trans-2-enoyl-CoA reductase [NADH] (392 aa).

NAD(+)-binding positions include 74–75 (FE), 111–112 (DA), and 141–142 (LA). Y227 contributes to the substrate binding site. Y237 acts as the Proton donor in catalysis. Residues K246 and 276 to 278 (VVT) each bind NAD(+).

The protein belongs to the TER reductase family. Monomer.

The catalysed reaction is a 2,3-saturated acyl-CoA + NAD(+) = a (2E)-enoyl-CoA + NADH + H(+). It participates in lipid metabolism; fatty acid biosynthesis. In terms of biological role, involved in the fatty acid synthesis (FAS II). Catalyzes the reduction of a carbon-carbon double bond in an enoyl moiety that is covalently linked to a coenzyme A (CoA). This Brachyspira hyodysenteriae (strain ATCC 49526 / WA1) protein is Trans-2-enoyl-CoA reductase [NADH].